Here is a 130-residue protein sequence, read N- to C-terminus: MSDPLGDMLTRIRNAQRARHAVCVAPASNLRANVLDVLKREGFIRGFSKEELRPGVAQLRIELKYNDGEPVIKEITRVSRPGRRVYSKIKELPRVYAGLGVSILSTPRGVMSDVEARTANVGGEVLCRVF.

It belongs to the universal ribosomal protein uS8 family. Part of the 30S ribosomal subunit. Contacts proteins S5 and S12.

One of the primary rRNA binding proteins, it binds directly to 16S rRNA central domain where it helps coordinate assembly of the platform of the 30S subunit. This chain is Small ribosomal subunit protein uS8, found in Acidiphilium cryptum (strain JF-5).